Reading from the N-terminus, the 567-residue chain is Malate synthase (567 aa).

Residue Arg177 is the Proton acceptor of the active site. The active-site Proton donor is the Asp466. The Microbody targeting signal motif lies at 565–567 (CKL).

The protein belongs to the malate synthase family.

It is found in the glyoxysome. It carries out the reaction glyoxylate + acetyl-CoA + H2O = (S)-malate + CoA + H(+). The protein operates within carbohydrate metabolism; glyoxylate cycle; (S)-malate from isocitrate: step 2/2. The polypeptide is Malate synthase (Oryza sativa subsp. japonica (Rice)).